The chain runs to 357 residues: Chorismate synthase (357 aa).

Arg-46 lines the NADP(+) pocket. Residues Arg-123–Ser-125, Asn-235–Ala-236, Gly-275, Lys-290–Ser-294, and Arg-316 contribute to the FMN site.

It belongs to the chorismate synthase family. Homotetramer. FMNH2 is required as a cofactor.

The enzyme catalyses 5-O-(1-carboxyvinyl)-3-phosphoshikimate = chorismate + phosphate. The protein operates within metabolic intermediate biosynthesis; chorismate biosynthesis; chorismate from D-erythrose 4-phosphate and phosphoenolpyruvate: step 7/7. Functionally, catalyzes the anti-1,4-elimination of the C-3 phosphate and the C-6 proR hydrogen from 5-enolpyruvylshikimate-3-phosphate (EPSP) to yield chorismate, which is the branch point compound that serves as the starting substrate for the three terminal pathways of aromatic amino acid biosynthesis. This reaction introduces a second double bond into the aromatic ring system. The polypeptide is Chorismate synthase (Sulfurovum sp. (strain NBC37-1)).